Consider the following 114-residue polypeptide: Protein ELF4-LIKE 4 (114 aa).

Residues 87-114 (SVDASSEGESSGTLKSDGKANQKRFRSG) are disordered. Positions 89-100 (DASSEGESSGTL) are enriched in polar residues.

Belongs to the EARLY FLOWERING 4 family. Homodimer.

The protein resides in the nucleus. Functionally, component of the central CCA1/LHY-TOC1 feedback loop in the circadian clock that promotes clock accuracy and is required for sustained rhythms in the absence of daily light/dark cycles. This is Protein ELF4-LIKE 4 (EFL4) from Arabidopsis thaliana (Mouse-ear cress).